A 264-amino-acid chain; its full sequence is Carbohydrate deacetylase (264 aa).

The active-site Proton acceptor is the Asp20. Asp21, His60, and His127 together coordinate Mg(2+). The active-site Proton donor is the His215.

It belongs to the YdjC deacetylase family. In terms of assembly, homodimer. It depends on Mg(2+) as a cofactor.

Functionally, probably catalyzes the deacetylation of acetylated carbohydrates an important step in the degradation of oligosaccharides. The sequence is that of Carbohydrate deacetylase from Thermus thermophilus (strain ATCC 27634 / DSM 579 / HB8).